The chain runs to 158 residues: C-type lectin BfL-1 (158 aa).

The N-terminal stretch at 1–21 (MGHFTFIGLCLLAMFLSLSGA) is a signal peptide. 4 cysteine pairs are disulfide-bonded: Cys-26–Cys-37, Cys-54–Cys-154, Cys-61–Cys-156, and Cys-129–Cys-146. Residues 33-155 (KNGLCYKVFS…CAALRPFLCQ (123 aa)) enclose the C-type lectin domain. 3 residues coordinate Ca(2+): Gln-119, Asp-121, and Glu-127. A Galactose-binding motif is present at residues 119 to 121 (QPD). The N-linked (GlcNAc...) asparagine glycan is linked to Asn-134. The Ca(2+) site is built by Asn-142 and Asp-143.

This sequence belongs to the true venom lectin family. In terms of assembly, homodimer; non-covalently linked. As to expression, expressed by the venom gland.

It is found in the secreted. Galactose-binding lectin which recognizes specific carbohydrate structures and agglutinates a variety of animal cells by binding to cell-surface glycoproteins and glycolipids. May be a calcium-dependent lectin. The sequence is that of C-type lectin BfL-1 from Bungarus fasciatus (Banded krait).